Here is a 417-residue protein sequence, read N- to C-terminus: Lissencephaly-1 homolog (417 aa).

The LisH domain occupies 7 to 39 (QKEELNRAIADYLFANGYVKALNAFREESQLAG). A coiled-coil region spans residues 54 to 86 (TSVIRLQKKVMDLEAKLNEAEKEFQSMQNAIGF). WD repeat units follow at residues 120 to 159 (GHRS…FEHT), 162 to 203 (GHTD…KTLT), 204 to 243 (GHDH…CTKT), 246 to 285 (GHTE…CQVV), 288 to 340 (GHEH…CLFV), 343 to 382 (GHDN…CHKT), and 385 to 417 (AHSH…WDCR).

The protein belongs to the WD repeat LIS1/nudF family.

The protein localises to the cytoplasm. The protein resides in the cytoskeleton. It localises to the microtubule organizing center. It is found in the centrosome. Functionally, positively regulates the activity of the minus-end directed microtubule motor protein dynein. May enhance dynein-mediated microtubule sliding by targeting dynein to the microtubule plus end. Required for several dynein- and microtubule-dependent processes. The protein is Lissencephaly-1 homolog of Schistosoma mansoni (Blood fluke).